The following is a 258-amino-acid chain: Undecaprenyl-diphosphatase (258 aa).

8 helical membrane-spanning segments follow: residues 14–34 (AAGEFLPISSSAHLVLMPWLL), 39–59 (QGLTYDIFLHLATLIAVLIYF), 79–99 (GKILWLLVLGTIPAAICGVLF), 106–126 (VFRSPFVIAAALIVFAVILHL), 136–156 (VALNVKTVLIIGCAQALALMP), 176–196 (AESAKISFLLSTPIIAGAAVL), 209–229 (AFIAGFLTAAIFGWLFIKFLM), and 237–257 (FNIFVVYRIALGVIIIITALM).

This sequence belongs to the UppP family.

Its subcellular location is the cell membrane. The enzyme catalyses di-trans,octa-cis-undecaprenyl diphosphate + H2O = di-trans,octa-cis-undecaprenyl phosphate + phosphate + H(+). In terms of biological role, catalyzes the dephosphorylation of undecaprenyl diphosphate (UPP). Confers resistance to bacitracin. This is Undecaprenyl-diphosphatase from Elusimicrobium minutum (strain Pei191).